An 876-amino-acid chain; its full sequence is Valine--tRNA ligase (876 aa).

The 'HIGH' region motif lies at 44 to 54; that stretch reads PNVTGKLHLGH. The 'KMSKS' region signature appears at 520 to 524; sequence KMSKS. K523 serves as a coordination point for ATP. Positions 805–876 form a coiled coil; it reads LEGLIDMDKE…VKARIEQLKA (72 aa).

This sequence belongs to the class-I aminoacyl-tRNA synthetase family. ValS type 1 subfamily. In terms of assembly, monomer.

The protein resides in the cytoplasm. It catalyses the reaction tRNA(Val) + L-valine + ATP = L-valyl-tRNA(Val) + AMP + diphosphate. Functionally, catalyzes the attachment of valine to tRNA(Val). As ValRS can inadvertently accommodate and process structurally similar amino acids such as threonine, to avoid such errors, it has a 'posttransfer' editing activity that hydrolyzes mischarged Thr-tRNA(Val) in a tRNA-dependent manner. In Staphylococcus carnosus (strain TM300), this protein is Valine--tRNA ligase.